The sequence spans 234 residues: Proteasome subunit alpha type-6 (234 aa).

A Phosphoserine modification is found at Ser-14. Lys-191 is covalently cross-linked (Glycyl lysine isopeptide (Lys-Gly) (interchain with G-Cter in ubiquitin)).

Belongs to the peptidase T1A family. The 26S proteasome consists of a 20S proteasome core and two 19S regulatory subunits. The 20S proteasome core is composed of 28 subunits that are arranged in four stacked rings, resulting in a barrel-shaped structure. The two end rings are each formed by seven alpha subunits, and the two central rings are each formed by seven beta subunits. The catalytic chamber with the active sites is on the inside of the barrel.

The protein localises to the cytoplasm. Its subcellular location is the nucleus. In terms of biological role, the proteasome degrades poly-ubiquitinated proteins in the cytoplasm and in the nucleus. It is essential for the regulated turnover of proteins and for the removal of misfolded proteins. The proteasome is a multicatalytic proteinase complex that is characterized by its ability to cleave peptides with Arg, Phe, Tyr, Leu, and Glu adjacent to the leaving group at neutral or slightly basic pH. It has an ATP-dependent proteolytic activity. This chain is Proteasome subunit alpha type-6 (PRE5), found in Saccharomyces cerevisiae (strain ATCC 204508 / S288c) (Baker's yeast).